Consider the following 229-residue polypeptide: Large ribosomal subunit protein uL1 (229 aa).

This sequence belongs to the universal ribosomal protein uL1 family. Part of the 50S ribosomal subunit.

In terms of biological role, binds directly to 23S rRNA. The L1 stalk is quite mobile in the ribosome, and is involved in E site tRNA release. Protein L1 is also a translational repressor protein, it controls the translation of the L11 operon by binding to its mRNA. This is Large ribosomal subunit protein uL1 from Latilactobacillus sakei subsp. sakei (strain 23K) (Lactobacillus sakei subsp. sakei).